The primary structure comprises 159 residues: Putative viral CXC chemokine 2 (159 aa).

2 cysteine pairs are disulfide-bonded: cysteine 50/cysteine 77 and cysteine 52/cysteine 93.

The protein belongs to the intercrine alpha (chemokine CxC) family.

This chain is Putative viral CXC chemokine 2 (UL147), found in Human cytomegalovirus (strain Merlin) (HHV-5).